A 192-amino-acid chain; its full sequence is Peptidyl-tRNA hydrolase (192 aa).

TRNA is bound at residue Tyr14. The Proton acceptor role is filled by His19. TRNA is bound by residues Tyr64, Asn66, and Asn112.

This sequence belongs to the PTH family. In terms of assembly, monomer.

It localises to the cytoplasm. It catalyses the reaction an N-acyl-L-alpha-aminoacyl-tRNA + H2O = an N-acyl-L-amino acid + a tRNA + H(+). Its function is as follows. Hydrolyzes ribosome-free peptidyl-tRNAs (with 1 or more amino acids incorporated), which drop off the ribosome during protein synthesis, or as a result of ribosome stalling. Functionally, catalyzes the release of premature peptidyl moieties from peptidyl-tRNA molecules trapped in stalled 50S ribosomal subunits, and thus maintains levels of free tRNAs and 50S ribosomes. This Anaeromyxobacter dehalogenans (strain 2CP-C) protein is Peptidyl-tRNA hydrolase.